Reading from the N-terminus, the 174-residue chain is UPF0398 protein YfdB (174 aa).

The protein belongs to the UPF0398 family.

The protein is UPF0398 protein YfdB (yfdB) of Lactococcus lactis subsp. lactis (strain IL1403) (Streptococcus lactis).